Consider the following 933-residue polypeptide: 2-oxoglutarate dehydrogenase E1 component (933 aa).

This sequence belongs to the alpha-ketoglutarate dehydrogenase family. Homodimer. Part of the 2-oxoglutarate dehydrogenase (OGDH) complex composed of E1 (2-oxoglutarate dehydrogenase), E2 (dihydrolipoamide succinyltransferase) and E3 (dihydrolipoamide dehydrogenase); the complex contains multiple copies of the three enzymatic components (E1, E2 and E3). Thiamine diphosphate is required as a cofactor.

It catalyses the reaction N(6)-[(R)-lipoyl]-L-lysyl-[protein] + 2-oxoglutarate + H(+) = N(6)-[(R)-S(8)-succinyldihydrolipoyl]-L-lysyl-[protein] + CO2. Functionally, E1 component of the 2-oxoglutarate dehydrogenase (OGDH) complex which catalyzes the decarboxylation of 2-oxoglutarate, the first step in the conversion of 2-oxoglutarate to succinyl-CoA and CO(2). The sequence is that of 2-oxoglutarate dehydrogenase E1 component from Staphylococcus saprophyticus subsp. saprophyticus (strain ATCC 15305 / DSM 20229 / NCIMB 8711 / NCTC 7292 / S-41).